The chain runs to 81 residues: Acyl carrier protein (81 aa).

Residues 5 to 80 enclose the Carrier domain; the sequence is EEIFSKVKSI…DIVSYIEKKL (76 aa). Position 40 is an O-(pantetheine 4'-phosphoryl)serine (Ser40).

This sequence belongs to the acyl carrier protein (ACP) family. 4'-phosphopantetheine is transferred from CoA to a specific serine of apo-ACP by AcpS. This modification is essential for activity because fatty acids are bound in thioester linkage to the sulfhydryl of the prosthetic group.

It is found in the cytoplasm. It participates in lipid metabolism; fatty acid biosynthesis. In terms of biological role, carrier of the growing fatty acid chain in fatty acid biosynthesis. The chain is Acyl carrier protein from Thermotoga maritima (strain ATCC 43589 / DSM 3109 / JCM 10099 / NBRC 100826 / MSB8).